The chain runs to 308 residues: Quinolinate synthase (308 aa).

2 residues coordinate iminosuccinate: His-21 and Ser-38. Position 83 (Cys-83) interacts with [4Fe-4S] cluster. Iminosuccinate contacts are provided by residues 109-111 (YIN) and Ser-126. Position 170 (Cys-170) interacts with [4Fe-4S] cluster. Iminosuccinate is bound by residues 196 to 198 (HPE) and Thr-213. A [4Fe-4S] cluster-binding site is contributed by Cys-263.

This sequence belongs to the quinolinate synthase family. Type 2 subfamily. Requires [4Fe-4S] cluster as cofactor.

The protein resides in the cytoplasm. It carries out the reaction iminosuccinate + dihydroxyacetone phosphate = quinolinate + phosphate + 2 H2O + H(+). It participates in cofactor biosynthesis; NAD(+) biosynthesis; quinolinate from iminoaspartate: step 1/1. In terms of biological role, catalyzes the condensation of iminoaspartate with dihydroxyacetone phosphate to form quinolinate. The protein is Quinolinate synthase of Sulfurisphaera tokodaii (strain DSM 16993 / JCM 10545 / NBRC 100140 / 7) (Sulfolobus tokodaii).